Reading from the N-terminus, the 93-residue chain is MVGEMPALKDLVLQLEPSVLDLDLYCYEEVPPDDIEEELVSPQQPYAVVASCAYCEKLVRLTVLADHSAIRQLEELLLRSLNIVCPLCTLQRQ.

The interval 1 to 41 is E7 terminal domain; sequence MVGEMPALKDLVLQLEPSVLDLDLYCYEEVPPDDIEEELVS. The LXCXE motif; interaction with host RB1 and TMEM173/STING motif lies at 24–28; the sequence is LYCYE. The segment at 52-88 is a zinc-finger region; sequence CAYCEKLVRLTVLADHSAIRQLEELLLRSLNIVCPLC. The Nuclear export signal motif lies at 70-78; it reads IRQLEELLL.

Belongs to the papillomaviridae E7 protein family. As to quaternary structure, homodimer. Homooligomer. Interacts with host RB1; this interaction induces dissociation of RB1-E2F1 complex thereby disrupting RB1 activity. Interacts with host EP300; this interaction represses EP300 transcriptional activity. Interacts with protein E2; this interaction inhibits E7 oncogenic activity. Interacts with host TMEM173/STING; this interaction impairs the ability of TMEM173/STING to sense cytosolic DNA and promote the production of type I interferon (IFN-alpha and IFN-beta). In terms of processing, highly phosphorylated.

It is found in the host cytoplasm. Its subcellular location is the host nucleus. In terms of biological role, plays a role in viral genome replication by driving entry of quiescent cells into the cell cycle. Stimulation of progression from G1 to S phase allows the virus to efficiently use the cellular DNA replicating machinery to achieve viral genome replication. E7 protein has both transforming and trans-activating activities. Induces the disassembly of the E2F1 transcription factor from RB1, with subsequent transcriptional activation of E2F1-regulated S-phase genes. Interferes with host histone deacetylation mediated by HDAC1 and HDAC2, leading to transcription activation. Also plays a role in the inhibition of both antiviral and antiproliferative functions of host interferon alpha. Interaction with host TMEM173/STING impairs the ability of TMEM173/STING to sense cytosolic DNA and promote the production of type I interferon (IFN-alpha and IFN-beta). This Homo sapiens (Human) protein is Protein E7.